Reading from the N-terminus, the 549-residue chain is Limonene dehydrogenase subunit B (549 aa).

Belongs to the carotenoid/retinoid oxidoreductase family. In terms of assembly, heterodimer composed of CtmA and CtmB. It depends on FAD as a cofactor.

It localises to the cytoplasm. The catalysed reaction is (4S)-limonene + A + H2O = (4S)-perillyl alcohol + AH2. The enzyme catalyses (4R)-limonene + A + H2O = (4R)-perillyl alcohol + AH2. The protein operates within terpene metabolism; monoterpene degradation. With respect to regulation, the presence of molecular oxygen causes a 40% reduction in specific activity. In terms of biological role, involved in the degradation of the cyclic monoterpene limonene. Catalyzes the oxidation of limonene at the primary methyl group, forming perillyl alcohol. Hydroxylates the R- and S-enantiomers to their respective enantiomeric form of perillyl alcohol at a similar rate. Native CtmAB oxidizes a wide range of monocyclic monoterpenes containing the allylic methyl group motif (1-methyl-cyclohex-1-ene). Can also catalyze the reverse reaction, the reduction of perillyl alcohol to limonene, but with lower efficiency. Cannot use molecular oxygen as an electron acceptor. The natural electron acceptor is likely a heterodimeric electron transfer flavoprotein (ETF). This Castellaniella defragrans (strain DSM 12143 / CCUG 39792 / 65Phen) (Alcaligenes defragrans) protein is Limonene dehydrogenase subunit B.